The sequence spans 846 residues: Neurofilament medium polypeptide (846 aa).

Residues 1–10 are compositionally biased toward polar residues; that stretch reads MSYTLDSLGN. The disordered stretch occupies residues 1–52; sequence MSYTLDSLGNPSAYRRVPTETRSSFSRVSGSPSSGFRSQSWSRGSPSTVSSS. Position 2 is an N-acetylserine (Ser2). The interval 2–104 is head; that stretch reads SYTLDSLGNP…LSRSNEKEQL (103 aa). Residues 22–45 are compositionally biased toward low complexity; sequence RSSFSRVSGSPSSGFRSQSWSRGS. A Phosphoserine modification is found at Ser31. Arg43 is subject to Omega-N-methylarginine. The O-linked (GlcNAc) threonine glycan is linked to Thr48. Ser98 carries the phosphoserine modification. The 312-residue stretch at 100–411 folds into the IF rod domain; sequence EKEQLQGLND…KLLEGEETRF (312 aa). A coil 1A region spans residues 104–135; sequence LQGLNDRFAGYIEKVHYLEQQNKEIEAEIHAL. Residues 136 to 148 are linker 1; that stretch reads RQKQASHAQLGDA. The coil 1B stretch occupies residues 149–247; the sequence is YDQEIRELRA…EEEVADLLAQ (99 aa). At Ser225 the chain carries Phosphoserine. Residues 248–264 form a linker 12 region; the sequence is IQASHITVERKDYLKTD. A coil 2A region spans residues 265–286; that stretch reads ISTALKEIRSQLECHSDQNMHQ. The interval 287–290 is linker 2; sequence AEEW. Residues 291 to 411 are coil 2B; that stretch reads FKCRYAKLTE…KLLEGEETRF (121 aa). Tyr319 bears the Phosphotyrosine mark. Phosphoserine is present on residues Ser345, Ser417, and Ser429. The tract at residues 412-845 is tail; it reads STFSGSITGP…HAIVKEVTQG (434 aa). An O-linked (GlcNAc) threonine glycan is attached at Thr431. Phosphoserine is present on residues Ser467 and Ser483. Positions 483 to 783 are disordered; it reads SAKEEKEEAE…GEDRSDDKVV (301 aa). Positions 489–499 are enriched in acidic residues; sequence EEAEEKEEEPE. A compositionally biased stretch (basic and acidic residues) spans 500 to 510; that stretch reads VEKSPVKSPEA. Phosphoserine occurs at positions 503 and 507. Acidic residues predominate over residues 511 to 533; that stretch reads KEEEEGEKEEEEEGQEEEEEEDE. Basic and acidic residues predominate over residues 534 to 553; that stretch reads GVKSDQAEEGGSEKEGSSEK. Residues Ser537, Ser545, Ser550, and Ser551 each carry the phosphoserine modification. Positions 554–575 are enriched in acidic residues; that stretch reads DEGEQEEEGETEAEGEGEEAEA. Thr564 is subject to Phosphothreonine. The span at 576–603 shows a compositional bias: basic and acidic residues; the sequence is KEEKKTEGKVEEMAIKEEIKVEKPEKAK. A phosphoserine mark is found at Ser604, Ser609, Ser643, Ser667, Ser687, Ser713, Ser721, Ser751, and Ser767. Basic and acidic residues-rich tracts occupy residues 610 to 675 and 687 to 709; these read PVEE…KAVE and SLEK…KAEE. 2 stretches are compositionally biased toward basic and acidic residues: residues 718-730 and 746-758; these read GDKS…KEDI and TQEK…EEKG. Residues 769 to 783 are compositionally biased toward basic and acidic residues; sequence AEEKKGEDRSDDKVV.

It belongs to the intermediate filament family. In terms of assembly, forms heterodimers with NEFL; which can further hetero-oligomerize (in vitro). Forms heterodimers with INA (in vitro). Post-translationally, there are a number of repeats of the tripeptide K-S-P, NFM is phosphorylated on a number of the serines in this motif. It is thought that phosphorylation of NFM results in the formation of interfilament cross bridges that are important in the maintenance of axonal caliber. In terms of processing, phosphorylation seems to play a major role in the functioning of the larger neurofilament polypeptides (NF-M and NF-H), the levels of phosphorylation being altered developmentally and coincidentally with a change in the neurofilament function. Phosphorylated in the head and rod regions by the PKC kinase PKN1, leading to the inhibition of polymerization. In terms of tissue distribution, expressed in the dorsal root ganglion neurons (at protein level).

It is found in the cytoplasm. The protein localises to the cytoskeleton. Its subcellular location is the cell projection. It localises to the axon. In terms of biological role, neurofilaments usually contain three intermediate filament proteins: NEFL, NEFM, and NEFH which are involved in the maintenance of neuronal caliber. May additionally cooperate with the neuronal intermediate filament proteins PRPH and INA to form neuronal filamentous networks. The protein is Neurofilament medium polypeptide (Nefm) of Rattus norvegicus (Rat).